The primary structure comprises 210 residues: Putative protein-lysine deacylase ABHD14B (210 aa).

Residue Ala2 is modified to N-acetylalanine. The residue at position 91 (Ser91) is a Phosphoserine. Residues Ser111, Asp162, and His188 each act as charge relay system in the active site.

Belongs to the AB hydrolase superfamily. ABHD14 family. As to quaternary structure, may interact with TAF1.

It localises to the cytoplasm. The protein localises to the nucleus. The enzyme catalyses L-lysyl-[protein] + acetyl-CoA = N(6)-acetyl-L-lysyl-[protein] + CoA + H(+). Acts as an atypical protein-lysine deacetylase in vitro. Catalyzes the deacetylation of lysine residues using CoA as substrate, generating acetyl-CoA and the free amine of protein-lysine residues. Additional experiments are however required to confirm the protein-lysine deacetylase activity in vivo. Has hydrolase activity towards various surrogate p-nitrophenyl (pNp) substrates, such as pNp-butyrate, pNp-acetate and pNp-octanoate in vitro, with a strong preference for pNp-acetate. May activate transcription. The polypeptide is Putative protein-lysine deacylase ABHD14B (Pongo abelii (Sumatran orangutan)).